Reading from the N-terminus, the 452-residue chain is Cell division protein FtsZ (452 aa).

GTP contacts are provided by residues 24–28 (GAGSN), 111–113 (GTG), Glu-142, Arg-146, and Asp-190.

This sequence belongs to the FtsZ family. In terms of assembly, homodimer. Polymerizes to form a dynamic ring structure in a strictly GTP-dependent manner. Interacts directly with several other division proteins.

Its subcellular location is the cytoplasm. In terms of biological role, essential cell division protein that forms a contractile ring structure (Z ring) at the future cell division site. The regulation of the ring assembly controls the timing and the location of cell division. One of the functions of the FtsZ ring is to recruit other cell division proteins to the septum to produce a new cell wall between the dividing cells. Binds GTP and shows GTPase activity. The polypeptide is Cell division protein FtsZ (Rickettsia felis (strain ATCC VR-1525 / URRWXCal2) (Rickettsia azadi)).